The following is a 73-amino-acid chain: Probable cytochrome b-c1 complex subunit 8 (73 aa).

The Mitochondrial matrix portion of the chain corresponds to 1-42 (MGQASKVFGKQITYSVSPFQQKLFVNYFKNAIPHLRRGVKDN). A helical transmembrane segment spans residues 43–60 (FFCSVPYFAALYITVNWA). Residues 61–73 (NETYHNEMKDHWY) are Mitochondrial intermembrane-facing.

Belongs to the UQCRQ/QCR8 family. In terms of assembly, component of the ubiquinol-cytochrome c oxidoreductase (cytochrome b-c1 complex, complex III, CIII), a multisubunit enzyme composed of 3 respiratory subunits cytochrome b, cytochrome c1 and Rieske protein, 2 core protein subunits, and additional low-molecular weight protein subunits. The complex exists as an obligatory dimer and forms supercomplexes (SCs) in the inner mitochondrial membrane with cytochrome c oxidase (complex IV, CIV).

It localises to the mitochondrion inner membrane. Component of the ubiquinol-cytochrome c oxidoreductase, a multisubunit transmembrane complex that is part of the mitochondrial electron transport chain which drives oxidative phosphorylation. The respiratory chain contains 3 multisubunit complexes succinate dehydrogenase (complex II, CII), ubiquinol-cytochrome c oxidoreductase (cytochrome b-c1 complex, complex III, CIII) and cytochrome c oxidase (complex IV, CIV), that cooperate to transfer electrons derived from NADH and succinate to molecular oxygen, creating an electrochemical gradient over the inner membrane that drives transmembrane transport and the ATP synthase. The cytochrome b-c1 complex catalyzes electron transfer from ubiquinol to cytochrome c, linking this redox reaction to translocation of protons across the mitochondrial inner membrane, with protons being carried across the membrane as hydrogens on the quinol. In the process called Q cycle, 2 protons are consumed from the matrix, 4 protons are released into the intermembrane space and 2 electrons are passed to cytochrome c. The chain is Probable cytochrome b-c1 complex subunit 8 from Dictyostelium discoideum (Social amoeba).